The sequence spans 288 residues: NAD(P)H-hydrate epimerase (288 aa).

A mitochondrion-targeting transit peptide spans 1-48 (MSALRALLGLGLLAAGSRLRRVPGRAGACPAGSAWWEARRPHSGGGGE). The YjeF N-terminal domain occupies 65 to 275 (AQAVDEELFN…ALEKKYQLNL (211 aa)). 119-123 (NNGGD) is a binding site for (6S)-NADPHX. Asn120 serves as a coordination point for K(+). The residue at position 144 (Lys144) is an N6-succinyllysine. Residue Asp185 participates in K(+) binding. (6S)-NADPHX is bound by residues 189–195 (GFSFKGD) and Asp218. Position 221 (Ser221) interacts with K(+).

This sequence belongs to the NnrE/AIBP family. As to quaternary structure, homodimer. Interacts with APOA1 and APOA2. Requires K(+) as cofactor. Undergoes physiological phosphorylation during sperm capacitation, downstream to PKA activation.

The protein localises to the mitochondrion. Its subcellular location is the secreted. It carries out the reaction (6R)-NADHX = (6S)-NADHX. It catalyses the reaction (6R)-NADPHX = (6S)-NADPHX. Functionally, catalyzes the epimerization of the S- and R-forms of NAD(P)HX, a damaged form of NAD(P)H that is a result of enzymatic or heat-dependent hydration. This is a prerequisite for the S-specific NAD(P)H-hydrate dehydratase to allow the repair of both epimers of NAD(P)HX. Accelerates cholesterol efflux from endothelial cells to high-density lipoprotein (HDL) and thereby regulates angiogenesis. This is NAD(P)H-hydrate epimerase from Canis lupus familiaris (Dog).